The following is a 547-amino-acid chain: Chaperonin GroEL (547 aa).

Residues 30–33 (TLGP), Lys51, 87–91 (DGTTT), Gly415, 479–481 (NAA), and Asp495 each bind ATP.

Belongs to the chaperonin (HSP60) family. In terms of assembly, forms a cylinder of 14 subunits composed of two heptameric rings stacked back-to-back. Interacts with the co-chaperonin GroES.

The protein resides in the cytoplasm. The enzyme catalyses ATP + H2O + a folded polypeptide = ADP + phosphate + an unfolded polypeptide.. In terms of biological role, together with its co-chaperonin GroES, plays an essential role in assisting protein folding. The GroEL-GroES system forms a nano-cage that allows encapsulation of the non-native substrate proteins and provides a physical environment optimized to promote and accelerate protein folding. The sequence is that of Chaperonin GroEL from Pseudomonas savastanoi pv. phaseolicola (strain 1448A / Race 6) (Pseudomonas syringae pv. phaseolicola (strain 1448A / Race 6)).